We begin with the raw amino-acid sequence, 134 residues long: Spermadhesin-1 (134 aa).

A signal peptide spans 1-20 (MKLSSVIPWALLLSTATVDS). Intrachain disulfides connect C30/C51 and C74/C95. A CUB domain is found at 30 to 131 (CGGILKEESG…SFYEVLYFQD (102 aa)).

It belongs to the spermadhesin family. Seminal vesicle tissue, ampulla and weakly in tissue of epididymis.

It is found in the secreted. Its function is as follows. Stimulates cell division and progesterone secretion of bovine granulosa cells in vitro in a potent and dose dependent manner. This protein appears to be a potent growth factor with effects on ovarian granulosa cells. This Bos taurus (Bovine) protein is Spermadhesin-1 (SPADH1).